The following is a 56-amino-acid chain: Photosystem II assembly protein Psb34 (56 aa).

Residues 1–33 (MRYTTDEGGRLNNFAIEPKVYQAQPWTPQQKVR) lie on the Cytoplasmic side of the membrane. Residues 34 to 54 (AALLVGGGLLLVAGLVAIAVG) form a helical membrane-spanning segment. The Extracellular segment spans residues 55 to 56 (VS).

As to quaternary structure, part of photosystem II (PSII) assembly intermediate complex PSII-I; crystallized from a strain without psbJ, it forms monomeric PSII before addition of the oxygen evolving complex. PSII-I includes 3 assembly factors not found in mature PSII (Psb27, Psb28 and Psb34). The N-terminus of Psb34 (this protein) binds to CP47 (psbB) in close proximity to PsbH on the cytoplasmic face of PSII.

The protein localises to the cellular thylakoid membrane. Functionally, involved in photosystem II (PSII) assembly and/or repair, probably in conversion of late PSII assembly intermediates into mature dimeric PSII. In Thermosynechococcus vestitus (strain NIES-2133 / IAM M-273 / BP-1), this protein is Photosystem II assembly protein Psb34.